We begin with the raw amino-acid sequence, 772 residues long: UDP-N-acetylmuramoyl-L-alanyl-D-glutamate--2,6-diaminopimelate ligase MurE homolog, chloroplastic (772 aa).

A chloroplast-targeting transit peptide spans 1 to 40; sequence MAFTFLSPHPVFLSLTGTTSSFSYKPVLLPFSRNSRTLTV. Disordered stretches follow at residues 42–87 and 141–168; these read AGPA…KLEE and LLKPNPPKTASLKKIGEEGNEEEGDVTD. Acidic residues-rich tracts occupy residues 54 to 63 and 158 to 168; these read ADDDPPEAPE and EGNEEEGDVTD. Ser194 is subject to Phosphoserine.

The protein belongs to the MurCDEF family. MurE subfamily. Component of the plastid-encoded plastid RNA polymerase (PEP) complex. In terms of tissue distribution, expressed in leaves and flowers.

The protein localises to the plastid. Its subcellular location is the chloroplast. Involved in chloroplast biogenesis. Required for thylakoid membrane development. Seems to be required for plastid-encoded plastid RNA polymerase (PEP)-dependent gene expression. This chain is UDP-N-acetylmuramoyl-L-alanyl-D-glutamate--2,6-diaminopimelate ligase MurE homolog, chloroplastic, found in Arabidopsis thaliana (Mouse-ear cress).